Reading from the N-terminus, the 118-residue chain is uncharacterized protein (118 aa).

A compositionally biased stretch (polar residues) spans methionine 1–glycine 12. The tract at residues methionine 1–lysine 63 is disordered. Over residues threonine 39–lysine 63 the composition is skewed to basic residues. The helical transmembrane segment at phenylalanine 81–isoleucine 101 threads the bilayer.

Its subcellular location is the membrane. This is an uncharacterized protein from Caenorhabditis elegans.